The chain runs to 1025 residues: Multidrug resistance protein MdtC (1025 aa).

Helical transmembrane passes span 3–23, 333–353, 360–380, 387–407, 431–451, 463–483, 528–548, 853–873, 875–895, 897–917, 953–973, and 984–1004; these read FFAL…AITL, EVEQ…FLFL, IIPA…MYLC, LSLM…IVVL, VGFT…PLLL, FAVT…TLTP, LVGV…ISIP, VILI…LYES, VHPL…LLAL, LFNA…IGIV, PIMM…LSGG, and ITIV…TPVV.

The protein belongs to the resistance-nodulation-cell division (RND) (TC 2.A.6) family. MdtC subfamily. As to quaternary structure, part of a tripartite efflux system composed of MdtA, MdtB and MdtC. MdtC forms a heteromultimer with MdtB.

The protein localises to the cell inner membrane. The MdtABC tripartite complex confers resistance against novobiocin and deoxycholate. In Escherichia coli (strain K12 / MC4100 / BW2952), this protein is Multidrug resistance protein MdtC.